The primary structure comprises 304 residues: MATH domain and coiled-coil domain-containing protein At2g42470 (304 aa).

The 118-residue stretch at 6–123 (QTSFTFEIDN…NNKLIIEVQV (118 aa)) folds into the MATH domain. A coiled-coil region spans residues 219–292 (FKVDWLKKKL…LKIELDRTRR (74 aa)).

The protein is MATH domain and coiled-coil domain-containing protein At2g42470 of Arabidopsis thaliana (Mouse-ear cress).